Here is a 181-residue protein sequence, read N- to C-terminus: ATP-dependent protease subunit HslV (181 aa).

Residue Thr6 is part of the active site. Residues Gly162, Cys165, and Thr168 each contribute to the Na(+) site.

Belongs to the peptidase T1B family. HslV subfamily. A double ring-shaped homohexamer of HslV is capped on each side by a ring-shaped HslU homohexamer. The assembly of the HslU/HslV complex is dependent on binding of ATP.

It localises to the cytoplasm. The catalysed reaction is ATP-dependent cleavage of peptide bonds with broad specificity.. With respect to regulation, allosterically activated by HslU binding. Protease subunit of a proteasome-like degradation complex believed to be a general protein degrading machinery. The polypeptide is ATP-dependent protease subunit HslV (Nitratidesulfovibrio vulgaris (strain ATCC 29579 / DSM 644 / CCUG 34227 / NCIMB 8303 / VKM B-1760 / Hildenborough) (Desulfovibrio vulgaris)).